The sequence spans 332 residues: tRNA-dihydrouridine synthase B (332 aa).

Residues 16–18 (PMA) and Gln-70 contribute to the FMN site. Cys-100 functions as the Proton donor in the catalytic mechanism. FMN-binding positions include Lys-139, 200 to 202 (NGD), and 224 to 225 (GR).

It belongs to the Dus family. DusB subfamily. It depends on FMN as a cofactor.

The enzyme catalyses a 5,6-dihydrouridine in tRNA + NAD(+) = a uridine in tRNA + NADH + H(+). It catalyses the reaction a 5,6-dihydrouridine in tRNA + NADP(+) = a uridine in tRNA + NADPH + H(+). In terms of biological role, catalyzes the synthesis of 5,6-dihydrouridine (D), a modified base found in the D-loop of most tRNAs, via the reduction of the C5-C6 double bond in target uridines. This is tRNA-dihydrouridine synthase B from Xanthomonas campestris pv. campestris (strain ATCC 33913 / DSM 3586 / NCPPB 528 / LMG 568 / P 25).